The sequence spans 68 residues: Frenatin-3 (68 aa).

The signal sequence occupies residues 1–22 (MHFLKKSIFLVLFLGLVSLSIC). A propeptide spanning residues 23 to 46 (EKEKREDQNEEEVDENEEESEEKR) is cleaved from the precursor. The interval 26–47 (KREDQNEEEVDENEEESEEKRG) is disordered. The span at 30–42 (QNEEEVDENEEES) shows a compositional bias: acidic residues.

The protein belongs to the frog skin active peptide (FSAP) family. Frenatin subfamily. Expressed by the granular skin glands.

Its subcellular location is the secreted. Antimicrobial peptide with activity against both Gram-positive and Gram-negative bacteria. Antibacterial activities have been tested against Bacillus cereus (MIC=12.5 ug/ml), Escherichia coli (MIC=50 ug/ml), Leuconostoc mesenteroides (MIC=25 ug/ml), Micrococcus luteus (MIC=1.5 ug/ml), Pastewella haemolytica (MIC=0.8 ug/ml), Staphylococcus aureus (MIC&lt;l00 ug/ml), Streptococcus faecalis (MIC&lt;150 ug/ml) and Streptococcus uberis (MIC=50 ug/ml). Strongly inhibits the formation of NO by neuronal nitric oxide synthase (nNOS) at micromolar concentrations. Acts by a non-competitive mechanism, probably by binding to calcium/calmodulin and as a consequence blocking calmodulin attachment to nNOS. This is Frenatin-3 from Nyctimystes infrafrenatus (White-lipped tree frog).